A 132-amino-acid polypeptide reads, in one-letter code: Small ribosomal subunit protein uS8 (132 aa).

The protein belongs to the universal ribosomal protein uS8 family. In terms of assembly, part of the 30S ribosomal subunit. Contacts proteins S5 and S12.

In terms of biological role, one of the primary rRNA binding proteins, it binds directly to 16S rRNA central domain where it helps coordinate assembly of the platform of the 30S subunit. In Bacillus anthracis (strain A0248), this protein is Small ribosomal subunit protein uS8.